Consider the following 482-residue polypeptide: Ras GTPase-activating protein-binding protein 2 (482 aa).

Residues 11–133 (VGREFVRQYY…FYVHNDMFRY (123 aa)) enclose the NTF2 domain. A compositionally biased stretch (acidic residues) spans 140–158 (DSEPELDEESEDEVEEEQE). 2 disordered regions span residues 140–171 (DSEP…QENA) and 187–318 (EPLE…EQND). 3 positions are modified to phosphoserine: Ser-141, Ser-149, and Ser-225. An acidic disordered region region spans residues 142–220 (EPELDEESED…PQVEEKNLEE (79 aa)). Positions 191-225 (ESSHEPEPEPESETKTEELKPQVEEKNLEELEEKS) are enriched in basic and acidic residues. Position 227 is a phosphothreonine (Thr-227). Residue Ser-235 is modified to Phosphoserine. Residues 247–264 (ASVTSKNLPPSGTVSSSG) show a composition bias toward polar residues. Residue Lys-281 forms a Glycyl lysine isopeptide (Lys-Gly) (interchain with G-Cter in SUMO2) linkage. The segment covering 290–300 (RVREQRPRERP) has biased composition (basic and acidic residues). An RRM domain is found at 331 to 409 (HQLFVGNLPH…VRLNVEEKKT (79 aa)). Lys-392 is subject to N6-succinyllysine. An RG-rich region region spans residues 404–476 (VEEKKTRAAR…GRGTGQMEGR (73 aa)). The span at 408-432 (KTRAARERETRGGGDDRRDIRRNDR) shows a compositional bias: basic and acidic residues. Positions 408 to 482 (KTRAARERET…MEGRFTGQRR (75 aa)) are disordered. The segment covering 433–445 (GPGGPRGIVGGGM) has biased composition (gly residues). Arg-457 carries the post-translational modification Omega-N-methylarginine. Ser-466 carries the post-translational modification Phosphoserine. Residue Arg-468 is modified to Omega-N-methylarginine.

As to quaternary structure, forms homooligomers. Forms heterodimers with G3BP1. Interacts with NFKBIA (via N-terminus). Interacts (via NTF2 domain) with USP10; inhibiting stress granule formation. Interacts (via NTF2 domain) with CAPRIN1; promoting stress granule formation. Associates (via RG-rich region) with 40S ribosome subunits. Interacts with PABPC1. (Microbial infection) Interacts with non-structural protein 3 (via C-terminus) of Sindbis virus and Semliki forest virus; this interaction inhibits the formation of host stress granules on viral mRNAs and the nsp3-G3BP2 complexes bind viral RNAs and probably orchestrate the assembly of viral replication complexes. Post-translationally, (Microbial infection) Cleaved by foot-and-mouth disease virus leader protease; this cleavage suppresses the formation of cytoplasmic stress granules.

The protein localises to the cytoplasm. The protein resides in the stress granule. With respect to regulation, under physiological conditions, G3BP2 adopts a compact state that is stabilized by intramolecular interactions between the RG-rich and the acidic regions that inhibit phase separation. Upon stress, polysomes disassemble and mRNAs are released in an unfolded protein-free state. Binding of unfolded mRNA to G3BP2 outcompetes the intramolecular interactions and RNA-bound G3BP2 adopts an expanded conformation in which the RG-rich region becomes exposed to engage in protein-protein and protein-RNA interactions, allowing physical cross-linking of RNA molecules to form protein-RNA condensates, leading to liquid-liquid phase separation (LLPS). In terms of biological role, scaffold protein that plays an essential role in cytoplasmic stress granule formation which acts as a platform for antiviral signaling. Plays an essential role in stress granule formation. Stress granules are membraneless compartments that store mRNAs and proteins, such as stalled translation pre-initiation complexes, in response to stress. Promotes formation of stress granules phase-separated membraneless compartment by undergoing liquid-liquid phase separation (LLPS) upon unfolded RNA-binding: functions as a molecular switch that triggers RNA-dependent LLPS in response to a rise in intracellular free RNA concentrations. The polypeptide is Ras GTPase-activating protein-binding protein 2 (Homo sapiens (Human)).